Here is a 116-residue protein sequence, read N- to C-terminus: Large ribosomal subunit protein bL19 (116 aa).

It belongs to the bacterial ribosomal protein bL19 family.

This protein is located at the 30S-50S ribosomal subunit interface and may play a role in the structure and function of the aminoacyl-tRNA binding site. The chain is Large ribosomal subunit protein bL19 from Staphylococcus aureus (strain Mu3 / ATCC 700698).